The primary structure comprises 682 residues: Probable methyltransferase PMT12 (682 aa).

Residues 1 to 11 are Cytoplasmic-facing; sequence MKLFLNSNLLR. The chain crosses the membrane as a helical; Signal-anchor for type II membrane protein span at residues 12 to 32; sequence NSIFFKISAFVLISVACFFLG. The Lumenal segment spans residues 33-682; that stretch reads KHWSEDGFRR…KRRKTKGKRA (650 aa). 12 N-linked (GlcNAc...) asparagine glycosylation sites follow: asparagine 67, asparagine 103, asparagine 125, asparagine 155, asparagine 173, asparagine 193, asparagine 273, asparagine 350, asparagine 395, asparagine 419, asparagine 600, and asparagine 625.

This sequence belongs to the methyltransferase superfamily.

The protein resides in the golgi apparatus membrane. The sequence is that of Probable methyltransferase PMT12 from Arabidopsis thaliana (Mouse-ear cress).